The primary structure comprises 389 residues: Succinate--CoA ligase [ADP-forming] subunit beta (389 aa).

Residues 9–244 (KQLFADYGLP…PSQEDERERR (236 aa)) form the ATP-grasp domain. ATP is bound by residues Lys-46, 53-55 (GRG), Glu-99, Thr-102, and Glu-107. Mg(2+)-binding residues include Asn-199 and Asp-213. Residues Asn-264 and 321 to 323 (GIV) each bind substrate.

It belongs to the succinate/malate CoA ligase beta subunit family. In terms of assembly, heterotetramer of two alpha and two beta subunits. The cofactor is Mg(2+).

The catalysed reaction is succinate + ATP + CoA = succinyl-CoA + ADP + phosphate. The enzyme catalyses GTP + succinate + CoA = succinyl-CoA + GDP + phosphate. It functions in the pathway carbohydrate metabolism; tricarboxylic acid cycle; succinate from succinyl-CoA (ligase route): step 1/1. Functionally, succinyl-CoA synthetase functions in the citric acid cycle (TCA), coupling the hydrolysis of succinyl-CoA to the synthesis of either ATP or GTP and thus represents the only step of substrate-level phosphorylation in the TCA. The beta subunit provides nucleotide specificity of the enzyme and binds the substrate succinate, while the binding sites for coenzyme A and phosphate are found in the alpha subunit. The polypeptide is Succinate--CoA ligase [ADP-forming] subunit beta (Alcanivorax borkumensis (strain ATCC 700651 / DSM 11573 / NCIMB 13689 / SK2)).